The chain runs to 350 residues: ATPase GET3 (350 aa).

Residue 26–33 (KGGVGKTT) coordinates ATP. Residue Asp57 is part of the active site. Residues Glu243 and Asn270 each coordinate ATP. Zn(2+) is bound by residues Cys282 and Cys285.

This sequence belongs to the arsA ATPase family. In terms of assembly, homodimer. Component of the Golgi to ER traffic (GET) complex, which is composed of GET1, GET2 and GET3. Within the complex, GET1 and GET2 form a heterotetramer which is stabilized by phosphatidylinositol binding and which binds to the GET3 homodimer. Interacts with the chloride channel protein GEF1.

The protein resides in the cytoplasm. It localises to the endoplasmic reticulum. Its subcellular location is the golgi apparatus. In terms of biological role, ATPase required for the post-translational delivery of tail-anchored (TA) proteins to the endoplasmic reticulum. Recognizes and selectively binds the transmembrane domain of TA proteins in the cytosol. This complex then targets to the endoplasmic reticulum by membrane-bound receptors GET1 and GET2, where the tail-anchored protein is released for insertion. This process is regulated by ATP binding and hydrolysis. ATP binding drives the homodimer towards the closed dimer state, facilitating recognition of newly synthesized TA membrane proteins. ATP hydrolysis is required for insertion. Subsequently, the homodimer reverts towards the open dimer state, lowering its affinity for the GET1-GET2 receptor, and returning it to the cytosol to initiate a new round of targeting. Cooperates with the HDEL receptor ERD2 to mediate the ATP-dependent retrieval of resident ER proteins that contain a C-terminal H-D-E-L retention signal from the Golgi to the ER. Involved in low-level resistance to the oxyanions arsenite and arsenate, and in heat tolerance. The sequence is that of ATPase GET3 from Candida albicans (strain SC5314 / ATCC MYA-2876) (Yeast).